The sequence spans 297 residues: ER membrane protein complex subunit 2-A (297 aa).

TPR repeat units follow at residues 87–120 (HRVK…DPTN), 155–188 (QEAW…NPHN), and 192–225 (YQQF…NNHN).

This sequence belongs to the EMC2 family. As to quaternary structure, component of the ER membrane protein complex (EMC).

The protein localises to the endoplasmic reticulum membrane. Functionally, part of the endoplasmic reticulum membrane protein complex (EMC) that enables the energy-independent insertion into endoplasmic reticulum membranes of newly synthesized membrane proteins. Preferentially accommodates proteins with transmembrane domains that are weakly hydrophobic or contain destabilizing features such as charged and aromatic residues. Involved in the cotranslational insertion of multi-pass membrane proteins in which stop-transfer membrane-anchor sequences become ER membrane spanning helices. It is also required for the post-translational insertion of tail-anchored/TA proteins in endoplasmic reticulum membranes. By mediating the proper cotranslational insertion of N-terminal transmembrane domains in an N-exo topology, with translocated N-terminus in the lumen of the ER, controls the topology of multi-pass membrane proteins. By regulating the insertion of various proteins in membranes, it is indirectly involved in many cellular processes. The protein is ER membrane protein complex subunit 2-A (emc2-a) of Xenopus laevis (African clawed frog).